A 259-amino-acid chain; its full sequence is Cobalt-precorrin-4 C(11)-methyltransferase (259 aa).

This sequence belongs to the precorrin methyltransferase family.

The catalysed reaction is Co-precorrin-4 + S-adenosyl-L-methionine = Co-precorrin-5A + S-adenosyl-L-homocysteine + H(+). The protein operates within cofactor biosynthesis; adenosylcobalamin biosynthesis; cob(II)yrinate a,c-diamide from sirohydrochlorin (anaerobic route): step 4/10. Functionally, catalyzes the methylation of C-11 in cobalt-precorrin-4 to form cobalt-precorrin-5A. This is Cobalt-precorrin-4 C(11)-methyltransferase (cbiF) from Methanocaldococcus jannaschii (strain ATCC 43067 / DSM 2661 / JAL-1 / JCM 10045 / NBRC 100440) (Methanococcus jannaschii).